A 295-amino-acid polypeptide reads, in one-letter code: Transcription factor bHLH19 (295 aa).

The region spanning 115-164 (VLAKEHVLAERKRREKLSEKFIALSALLPGLKKADKVTILDDAISRMKQL) is the bHLH domain.

Homodimer. As to expression, expressed in roots and leaves.

Its subcellular location is the nucleus. The chain is Transcription factor bHLH19 (BHLH19) from Arabidopsis thaliana (Mouse-ear cress).